We begin with the raw amino-acid sequence, 326 residues long: MIENTLKIEHHKLIILGSGPAGYTAAIYSARANLEPLLFTGNNKGGQLINTNEIENWPGDSKSLTGLELMERMHNHAKSLNTKIIPNEIIRVNFFKIPFLLVSDTNQYYTSDSVIIATGASPKYLGLTSESKFIGKGVSVCAVCDGFFYKNEDVAVVGGGNTALEEALYLSNIARKVYLIHRRKTFSAEKILISRMLNKTKKNIILRTGCIVNKIIGGVNGVRGVQITCNDSKENKCLINLSGVFIAIGHAPNTKLFKNQLFMKNDYILVKSGIHGNVTQTNIPGIFAAGDVIDHVYKQAITSSASGCMAALDAEKYIDQKYGFKI.

40–47 (TGNNKGGQ) contacts FAD. The cysteines at positions 141 and 144 are disulfide-linked. 291–300 (DVIDHVYKQA) contacts FAD.

This sequence belongs to the class-II pyridine nucleotide-disulfide oxidoreductase family. In terms of assembly, homodimer. FAD serves as cofactor.

The protein localises to the cytoplasm. It catalyses the reaction [thioredoxin]-dithiol + NADP(+) = [thioredoxin]-disulfide + NADPH + H(+). The protein is Thioredoxin reductase (trxB) of Buchnera aphidicola subsp. Baizongia pistaciae (strain Bp).